A 370-amino-acid chain; its full sequence is tRNA-specific 2-thiouridylase MnmA (370 aa).

ATP is bound by residues 11-18 and methionine 37; that span reads AMSGGVDS. The tract at residues 99–101 is interaction with target base in tRNA; that stretch reads NPD. Cysteine 104 (nucleophile) is an active-site residue. Cysteine 104 and cysteine 201 are disulfide-bonded. Glycine 129 provides a ligand contact to ATP. The segment at 151-153 is interaction with tRNA; it reads KDQ. The active-site Cysteine persulfide intermediate is cysteine 201. The interaction with tRNA stretch occupies residues 313-314; sequence RY.

This sequence belongs to the MnmA/TRMU family. Interacts with TusE.

The protein localises to the cytoplasm. It carries out the reaction S-sulfanyl-L-cysteinyl-[protein] + uridine(34) in tRNA + AH2 + ATP = 2-thiouridine(34) in tRNA + L-cysteinyl-[protein] + A + AMP + diphosphate + H(+). Functionally, catalyzes the 2-thiolation of uridine at the wobble position (U34) of tRNA(Lys), tRNA(Glu) and tRNA(Gln), leading to the formation of s(2)U34, the first step of tRNA-mnm(5)s(2)U34 synthesis. Sulfur is provided by IscS, via a sulfur-relay system. Binds ATP and its substrate tRNAs. The sequence is that of tRNA-specific 2-thiouridylase MnmA from Buchnera aphidicola subsp. Baizongia pistaciae (strain Bp).